We begin with the raw amino-acid sequence, 554 residues long: Glucose-6-phosphate isomerase (554 aa).

Glu358 functions as the Proton donor in the catalytic mechanism. Catalysis depends on residues His389 and Lys515. Residues 527 to 540 (ANNSPAPQSDSSTD) are compositionally biased toward polar residues. Residues 527-554 (ANNSPAPQSDSSTDALVRRYRSERGRTS) form a disordered region. Residues 542–554 (LVRRYRSERGRTS) are compositionally biased toward basic and acidic residues.

It belongs to the GPI family.

It localises to the cytoplasm. It catalyses the reaction alpha-D-glucose 6-phosphate = beta-D-fructose 6-phosphate. It functions in the pathway carbohydrate biosynthesis; gluconeogenesis. The protein operates within carbohydrate degradation; glycolysis; D-glyceraldehyde 3-phosphate and glycerone phosphate from D-glucose: step 2/4. Functionally, catalyzes the reversible isomerization of glucose-6-phosphate to fructose-6-phosphate. The polypeptide is Glucose-6-phosphate isomerase (Mycolicibacterium paratuberculosis (strain ATCC BAA-968 / K-10) (Mycobacterium paratuberculosis)).